A 1029-amino-acid polypeptide reads, in one-letter code: Endosome/lysosome-associated apoptosis and autophagy regulator family member 2 (1029 aa).

A signal peptide spans 1 to 47 (MLFRARGPVRGRGWGRPAEAPRRGRSPPWSPAWICCWALAGCQAAWA). At 48–929 (GDLPSSSSRP…TCETVDFWLK (882 aa)) the chain is on the extracellular side. N-linked (GlcNAc...) asparagine glycosylation is present at asparagine 169. 3 cysteine pairs are disulfide-bonded: cysteine 293/cysteine 310, cysteine 323/cysteine 346, and cysteine 326/cysteine 358. Residues asparagine 405 and asparagine 691 are each glycosylated (N-linked (GlcNAc...) asparagine). Residues 672-877 (SDCFFYHEKE…LWESAEACPL (206 aa)) form the MRH domain. 4 cysteine pairs are disulfide-bonded: cysteine 674-cysteine 720, cysteine 730-cysteine 758, cysteine 827-cysteine 863, and cysteine 839-cysteine 875. A helical membrane pass occupies residues 930–950 (VGAGVGAFTAVLLVALTCYFW). Over 951–1029 (KKNQKLEYKY…QLKTSRSPNI (79 aa)) the chain is Cytoplasmic. Serine 1018 is modified (phosphoserine).

This sequence belongs to the ELAPOR family.

It is found in the cell membrane. Functions as a regulator of the BMP signaling pathway and may be involved in epidermal differentiation. The protein is Endosome/lysosome-associated apoptosis and autophagy regulator family member 2 of Homo sapiens (Human).